We begin with the raw amino-acid sequence, 136 residues long: Small ribosomal subunit protein bS16 (136 aa).

This sequence belongs to the bacterial ribosomal protein bS16 family.

The sequence is that of Small ribosomal subunit protein bS16 from Pseudarthrobacter chlorophenolicus (strain ATCC 700700 / DSM 12829 / CIP 107037 / JCM 12360 / KCTC 9906 / NCIMB 13794 / A6) (Arthrobacter chlorophenolicus).